The following is a 444-amino-acid chain: Cell wall mannoprotein PST1 (444 aa).

Residues 1-19 (MQLHSLIASTALLITSALA) form the signal peptide. N57, N76, N83, N86, N196, N210, N228, N235, N242, N263, N268, N280, N292, N305, and N329 each carry an N-linked (GlcNAc...) asparagine glycan. Low complexity-rich tracts occupy residues 359 to 381 (SVKL…SKSS) and 395 to 418 (KAAA…SSKG). A disordered region spans residues 359-418 (SVKLSSTSKSQSSQTTAKVSKSSSKAEEKKFTSGDIKAAASASSVSSSGASSSSSKSSKG). Residue N419 is the site of GPI-anchor amidated asparagine attachment. The propeptide at 420-444 (AAIMAPIGQTTPLVGLLTAIIMSIM) is removed in mature form.

Belongs to the SPS2 family. In terms of processing, extensively N- and O-mannosylated.

The protein resides in the cell membrane. It localises to the secreted. The protein localises to the cell wall. Functionally, has a partially redundant function to ECM33 in cell wall integrity. May be involved in a repair mechanism activated in response to cell wall damage. This chain is Cell wall mannoprotein PST1 (PST1), found in Saccharomyces cerevisiae (strain ATCC 204508 / S288c) (Baker's yeast).